The chain runs to 1167 residues: ATP-dependent helicase/nuclease subunit A (1167 aa).

The UvrD-like helicase ATP-binding domain maps to 2-451; the sequence is KNWTAEQMRA…IELSLNFRSR (450 aa). ATP is bound at residue 23–30; that stretch reads AAAGAGKT. The 291-residue stretch at 478-768 folds into the UvrD-like helicase C-terminal domain; it reads KAFLKKGADY…RVMSVHKSKG (291 aa).

It belongs to the helicase family. AddA subfamily. Heterodimer of AddA and AddB/RexB. Requires Mg(2+) as cofactor.

The catalysed reaction is Couples ATP hydrolysis with the unwinding of duplex DNA by translocating in the 3'-5' direction.. It catalyses the reaction ATP + H2O = ADP + phosphate + H(+). Functionally, the heterodimer acts as both an ATP-dependent DNA helicase and an ATP-dependent, dual-direction single-stranded exonuclease. Recognizes the chi site generating a DNA molecule suitable for the initiation of homologous recombination. The AddA nuclease domain is required for chi fragment generation; this subunit has the helicase and 3' -&gt; 5' nuclease activities. This is ATP-dependent helicase/nuclease subunit A from Carboxydothermus hydrogenoformans (strain ATCC BAA-161 / DSM 6008 / Z-2901).